A 2111-amino-acid chain; its full sequence is Mycocerosic acid synthase-like polyketide synthase (2111 aa).

The N-terminal stretch at 1-15 (MTQNCVAPVAIIGMA) is a signal peptide. Cys-16 carries the N-palmitoyl cysteine lipid modification. Cys-16 is lipidated: S-diacylglycerol cysteine. Residues 16 to 428 (CRLPGAINSP…GTNVHAVLEQ (413 aa)) enclose the Ketosynthase family 3 (KS3) domain. Cys-178 acts as the Acyl-thioester intermediate; for beta-ketoacyl synthase activity in catalysis. Catalysis depends on for beta-ketoacyl synthase activity residues His-313 and His-349. A linker domain (LD) region spans residues 430 to 537 (PESPAETAAE…MPQQAVTNDD (108 aa)). An acyltransferase (AT) region spans residues 538-837 (RGPVWVFSGQ…LAVFAAMRRQ (300 aa)). Ser-629 functions as the Acyl-ester intermediate; for acyltransferase activity in the catalytic mechanism. The tract at residues 896–1176 (PSVSVHPLLG…LSAMGLQLGT (281 aa)) is dehydratase (DH). The segment at 901 to 1025 (HPLLGSHVVL…GDVDAERPAA (125 aa)) is N-terminal hotdog fold. One can recognise a PKS/mFAS DH domain in the interval 901–1183 (HPLLGSHVVL…LGTGNSDKAE (283 aa)). His-934 (proton acceptor; for dehydratase activity) is an active-site residue. The C-terminal hotdog fold stretch occupies residues 1036-1183 (PNRVDGDELR…LGTGNSDKAE (148 aa)). Residue Asp-1100 is the Proton donor; for dehydratase activity of the active site. Residues 1215 to 1391 (SWLVILAGDD…SPEDETAWRD (177 aa)) are pseudo beta-ketoacyl reductase (PsiKR). The segment at 1419–1743 (EGMRLVVRNP…QHTGKLVIDI (325 aa)) is enoylreductase (ER). The tract at residues 1765–2008 (GAYVITGGLG…RSPFAELFLA (244 aa)) is beta-ketoacyl reductase (KR). NADP(+) contacts are provided by residues 1773 to 1776 (LGGL), 1796 to 1799 (SRSA), 1824 to 1825 (DI), and 1902 to 1903 (FS). A Carrier domain is found at 2029–2104 (EEWPTHLRRL…QRLCEMLDTD (76 aa)). O-(pantetheine 4'-phosphoryl)serine is present on Ser-2064.

Homodimer.

The protein resides in the cell membrane. It functions in the pathway lipid metabolism; fatty acid biosynthesis. In terms of biological role, polyketide synthase involved in the biosynthesis of 2,4-dimethyl-2-eicosenoic acid, a lipid component of the lipooligosaccharides (LOS) which are not located at the bacterial surface but rather in deeper compartments of the cell envelope of M.smegmatis. This is Mycocerosic acid synthase-like polyketide synthase from Mycolicibacterium smegmatis (strain ATCC 700084 / mc(2)155) (Mycobacterium smegmatis).